The sequence spans 319 residues: tRNA dimethylallyltransferase (319 aa).

Residue 11–18 participates in ATP binding; the sequence is GPTCSGKS. Substrate is bound at residue 13–18; sequence TCSGKS. Interaction with substrate tRNA stretches follow at residues 36–39 and 160–164; these read DSMQ and QRIAR.

It belongs to the IPP transferase family. Monomer. Requires Mg(2+) as cofactor.

It carries out the reaction adenosine(37) in tRNA + dimethylallyl diphosphate = N(6)-dimethylallyladenosine(37) in tRNA + diphosphate. Its function is as follows. Catalyzes the transfer of a dimethylallyl group onto the adenine at position 37 in tRNAs that read codons beginning with uridine, leading to the formation of N6-(dimethylallyl)adenosine (i(6)A). This chain is tRNA dimethylallyltransferase, found in Granulibacter bethesdensis (strain ATCC BAA-1260 / CGDNIH1).